The chain runs to 128 residues: Organic solute transporter subunit beta (128 aa).

The Extracellular portion of the chain corresponds to 1–30 (MDHSAEKAAANAEVPQELLEEMLWYFRAED). The helical transmembrane segment at 31–53 (AAPWNYSILVLAVLVVMTSMFLL) threads the bilayer. Over 54-128 (RRSILANRNR…FLPDPQETES (75 aa)) the chain is Cytoplasmic. Disordered regions lie at residues 61 to 80 (RNRKKQPQDKETPEDLHLDD) and 101 to 128 (PDLAPGEPELKEKDSSLVFLPDPQETES). Composition is skewed to basic and acidic residues over residues 66 to 80 (QPQDKETPEDLHLDD) and 101 to 115 (PDLAPGEPELKEKDS). Serine 116 is modified (phosphoserine).

The protein belongs to the OST-beta family. As to quaternary structure, interacts with SLC51A. The Ost-alpha/Ost-beta complex is a heterodimer composed of alpha (SLC51A) and beta (SLC51B) subunit; induces the transport of SLC51A from the endoplasmic reticulum to the plasma membrane. Present at high level in ileum. In ileum, it is restricted to the apical domain on the mature villus enterocytes with little detectable expression in the goblet cells or crypt enterocytes (at protein level). Expressed in kidney but not in heart, brain, liver, spleen, embryo, lung, thymus, ovary nor testis.

The protein localises to the cell membrane. It carries out the reaction taurocholate(out) = taurocholate(in). The enzyme catalyses tauroursodeoxycholate(out) = tauroursodeoxycholate(in). The catalysed reaction is glycoursodeoxycholate(out) = glycoursodeoxycholate(in). It catalyses the reaction glycocholate(out) = glycocholate(in). It carries out the reaction taurochenodeoxycholate(out) = taurochenodeoxycholate(in). The enzyme catalyses glycochenodeoxycholate(out) = glycochenodeoxycholate(in). The catalysed reaction is taurodeoxycholate(out) = taurodeoxycholate(in). It catalyses the reaction glycodeoxycholate(out) = glycodeoxycholate(in). It carries out the reaction prostaglandin E2(out) = prostaglandin E2(in). The enzyme catalyses estrone 3-sulfate(out) = estrone 3-sulfate(in). The catalysed reaction is dehydroepiandrosterone 3-sulfate(out) = dehydroepiandrosterone 3-sulfate(in). Its function is as follows. Essential component of the Ost-alpha/Ost-beta complex, a heterodimer that acts as the intestinal basolateral transporter responsible for bile acid export from enterocytes into portal blood. The Ost-alpha/Ost-beta complex efficiently transports the major species of bile acids (taurocholate). Taurine conjugates are transported more efficiently across the basolateral membrane than glycine-conjugated bile acids. Can also transport steroids such as estrone 3-sulfate and dehydroepiandrosterone 3-sulfate, therefore playing a role in the enterohepatic circulation of sterols. Able to transport eicosanoids such as prostaglandin E2. Modulates SLC51A glycosylation, membrane trafficking and stability activities. In Mus musculus (Mouse), this protein is Organic solute transporter subunit beta (Slc51b).